The chain runs to 245 residues: tRNA1(Val) (adenine(37)-N6)-methyltransferase (245 aa).

It belongs to the methyltransferase superfamily. tRNA (adenine-N(6)-)-methyltransferase family.

The protein resides in the cytoplasm. The catalysed reaction is adenosine(37) in tRNA1(Val) + S-adenosyl-L-methionine = N(6)-methyladenosine(37) in tRNA1(Val) + S-adenosyl-L-homocysteine + H(+). Functionally, specifically methylates the adenine in position 37 of tRNA(1)(Val) (anticodon cmo5UAC). The sequence is that of tRNA1(Val) (adenine(37)-N6)-methyltransferase from Escherichia coli O7:K1 (strain IAI39 / ExPEC).